The primary structure comprises 390 residues: Succinate--CoA ligase [ADP-forming] subunit beta (390 aa).

The ATP-grasp domain occupies 9–245 (KHLLKKYNIP…TTQEDEHETM (237 aa)). ATP is bound by residues Lys-46, 53-55 (GRG), Glu-99, Ser-102, and Glu-107. Residues Asn-200 and Asp-214 each contribute to the Mg(2+) site. Residues Asn-265 and 322-324 (GIV) contribute to the substrate site.

Belongs to the succinate/malate CoA ligase beta subunit family. As to quaternary structure, heterotetramer of two alpha and two beta subunits. It depends on Mg(2+) as a cofactor.

The catalysed reaction is succinate + ATP + CoA = succinyl-CoA + ADP + phosphate. The enzyme catalyses GTP + succinate + CoA = succinyl-CoA + GDP + phosphate. The protein operates within carbohydrate metabolism; tricarboxylic acid cycle; succinate from succinyl-CoA (ligase route): step 1/1. Functionally, succinyl-CoA synthetase functions in the citric acid cycle (TCA), coupling the hydrolysis of succinyl-CoA to the synthesis of either ATP or GTP and thus represents the only step of substrate-level phosphorylation in the TCA. The beta subunit provides nucleotide specificity of the enzyme and binds the substrate succinate, while the binding sites for coenzyme A and phosphate are found in the alpha subunit. In Coxiella burnetii (strain RSA 493 / Nine Mile phase I), this protein is Succinate--CoA ligase [ADP-forming] subunit beta.